A 265-amino-acid polypeptide reads, in one-letter code: tRNA (guanine-N(7)-)-methyltransferase (265 aa).

Residues Met1–Ala16 are compositionally biased toward basic and acidic residues. The segment at Met1 to Pro40 is disordered. The segment covering Asp18–Thr31 has biased composition (low complexity). Residues Glu95, Glu120, Asp147, and Asp170 each coordinate S-adenosyl-L-methionine. Asp170 is an active-site residue. Substrate contacts are provided by residues Lys174, Asp206, and Thr241–Glu244.

It belongs to the class I-like SAM-binding methyltransferase superfamily. TrmB family.

It catalyses the reaction guanosine(46) in tRNA + S-adenosyl-L-methionine = N(7)-methylguanosine(46) in tRNA + S-adenosyl-L-homocysteine. Its pathway is tRNA modification; N(7)-methylguanine-tRNA biosynthesis. Its function is as follows. Catalyzes the formation of N(7)-methylguanine at position 46 (m7G46) in tRNA. This Burkholderia thailandensis (strain ATCC 700388 / DSM 13276 / CCUG 48851 / CIP 106301 / E264) protein is tRNA (guanine-N(7)-)-methyltransferase.